The chain runs to 329 residues: Malate dehydrogenase (329 aa).

NAD(+) is bound at residue 12–18; the sequence is GAAGQIG. Substrate contacts are provided by arginine 95 and arginine 101. Residues asparagine 108, glutamine 115, and 132–134 contribute to the NAD(+) site; that span reads VGN. Positions 134 and 165 each coordinate substrate. The Proton acceptor role is filled by histidine 190.

Belongs to the LDH/MDH superfamily. MDH type 2 family.

It carries out the reaction (S)-malate + NAD(+) = oxaloacetate + NADH + H(+). Functionally, catalyzes the reversible oxidation of malate to oxaloacetate. The sequence is that of Malate dehydrogenase from Bordetella bronchiseptica (strain ATCC BAA-588 / NCTC 13252 / RB50) (Alcaligenes bronchisepticus).